Consider the following 252-residue polypeptide: Triosephosphate isomerase (252 aa).

9 to 11 (NWK) serves as a coordination point for substrate. H95 (electrophile) is an active-site residue. E167 serves as the catalytic Proton acceptor. Substrate contacts are provided by residues G173, S213, and 234–235 (GG). Phosphoserine is present on S213.

The protein belongs to the triosephosphate isomerase family. As to quaternary structure, homodimer.

It localises to the cytoplasm. It carries out the reaction D-glyceraldehyde 3-phosphate = dihydroxyacetone phosphate. Its pathway is carbohydrate biosynthesis; gluconeogenesis. The protein operates within carbohydrate degradation; glycolysis; D-glyceraldehyde 3-phosphate from glycerone phosphate: step 1/1. In terms of biological role, involved in the gluconeogenesis. Catalyzes stereospecifically the conversion of dihydroxyacetone phosphate (DHAP) to D-glyceraldehyde-3-phosphate (G3P). This Oceanobacillus iheyensis (strain DSM 14371 / CIP 107618 / JCM 11309 / KCTC 3954 / HTE831) protein is Triosephosphate isomerase.